The sequence spans 102 residues: Small ribosomal subunit protein uS10 (102 aa).

It belongs to the universal ribosomal protein uS10 family. As to quaternary structure, part of the 30S ribosomal subunit.

Involved in the binding of tRNA to the ribosomes. The sequence is that of Small ribosomal subunit protein uS10 from Pediococcus pentosaceus (strain ATCC 25745 / CCUG 21536 / LMG 10740 / 183-1w).